Consider the following 284-residue polypeptide: tRNA dimethylallyltransferase (284 aa).

6–13 (GPTASGKS) provides a ligand contact to ATP. Substrate is bound at residue 8 to 13 (TASGKS). Residues 31–34 (DSLS) form an interaction with substrate tRNA region.

It belongs to the IPP transferase family. In terms of assembly, monomer. It depends on Mg(2+) as a cofactor.

It carries out the reaction adenosine(37) in tRNA + dimethylallyl diphosphate = N(6)-dimethylallyladenosine(37) in tRNA + diphosphate. Catalyzes the transfer of a dimethylallyl group onto the adenine at position 37 in tRNAs that read codons beginning with uridine, leading to the formation of N6-(dimethylallyl)adenosine (i(6)A). The sequence is that of tRNA dimethylallyltransferase from Nautilia profundicola (strain ATCC BAA-1463 / DSM 18972 / AmH).